The following is a 459-amino-acid chain: uncharacterized protein (459 aa).

In terms of domain architecture, TRAM spans P5–K63. Positions 76, 82, 85, and 166 each coordinate [4Fe-4S] cluster. S-adenosyl-L-methionine-binding residues include Q290, Y319, D340, and D388. C415 (nucleophile) is an active-site residue.

This sequence belongs to the class I-like SAM-binding methyltransferase superfamily. RNA M5U methyltransferase family.

This is an uncharacterized protein from Listeria monocytogenes serotype 4b (strain F2365).